A 371-amino-acid polypeptide reads, in one-letter code: Protein RecA (371 aa).

75-82 (GPESSGKT) provides a ligand contact to ATP. The disordered stretch occupies residues 343-371 (KAKDEPIADEDQPIDVVPNFDDQDVEPQN).

This sequence belongs to the RecA family.

It localises to the cytoplasm. Its function is as follows. Can catalyze the hydrolysis of ATP in the presence of single-stranded DNA, the ATP-dependent uptake of single-stranded DNA by duplex DNA, and the ATP-dependent hybridization of homologous single-stranded DNAs. It interacts with LexA causing its activation and leading to its autocatalytic cleavage. The protein is Protein RecA of Corynebacterium urealyticum (strain ATCC 43042 / DSM 7109).